The chain runs to 242 residues: Ras-like protein family member 11A (242 aa).

The tract at residues 17–241 (ESSSDYLLPK…SSKAKASSAL (225 aa)) is small GTPase-like. Residues 34 to 41 (GAGCVGKS), 81 to 88 (DTPGGIQA), and 147 to 150 (NKGD) contribute to the GTP site.

It belongs to the small GTPase superfamily. Ras family. In terms of assembly, interacts with UBF/UBTF.

Its subcellular location is the nucleus. It localises to the nucleolus. It carries out the reaction GTP + H2O = GDP + phosphate + H(+). Its function is as follows. Regulator of rDNA transcription. Acts in cooperation UBF/UBTF and positively regulates RNA polymerase I transcription. The chain is Ras-like protein family member 11A from Mus musculus (Mouse).